Here is a 279-residue protein sequence, read N- to C-terminus: Undecaprenyl-diphosphatase (279 aa).

8 helical membrane passes run 2 to 22 (LIIELLKAIFFGIIEGITEWL), 44 to 64 (AFIEMFNIVIQLGAIIAVMLI), 85 to 105 (WQLWLKVVIACIPSILIAVPL), 113 to 133 (FYFMVPIAIALIVYGIAFIWI), 163 to 183 (VLSIVPGTSRSGATILGAIIL), 188 to 208 (TVAADFTFFLAIPTMFGYSGL), 223 to 243 (AQVLILLVASLTAFVVSLLAI), and 255 to 275 (FTIFGKYRIVLGSLLLIYSFF).

Belongs to the UppP family.

It is found in the cell membrane. The enzyme catalyses di-trans,octa-cis-undecaprenyl diphosphate + H2O = di-trans,octa-cis-undecaprenyl phosphate + phosphate + H(+). Its function is as follows. Catalyzes the dephosphorylation of undecaprenyl diphosphate (UPP). Confers resistance to bacitracin. In Streptococcus pyogenes serotype M12 (strain MGAS2096), this protein is Undecaprenyl-diphosphatase.